The sequence spans 323 residues: uncharacterized protein (323 aa).

This is an uncharacterized protein from Bacillus subtilis (strain 168).